The chain runs to 309 residues: MILDNLFKNLIYDPVSALGILVFYILLVNLPISLGAVFKKKSFFIVKLLTILVNLLITLQLLFRWSISGHFPVSNLYESLYFLAWGISMGQLYIEREYSSPIIPSIAIPIELLTVAFACFVLPDDLKLSSNLVPALRSSWLVMHVSVVMLSYAALIIGSLLSASVLFINRNKPLQIRSSSTGIGGFKFFNNNYLNDLADPVEFSHSEELDTLSYRSILIGFVLLTLGLISGAVWANEAWGTWWSWDPKETWAFITWLFYAAYLHMRISKGWQGRRPALLATSGFLVVIVCYLGVNFLGIGLHSYGWIFG.

The next 8 helical transmembrane spans lie at 18-38, 43-63, 67-87, 102-122, 148-168, 216-236, 250-267, and 279-299; these read LGILVFYILLVNLPISLGAVF, FFIVKLLTILVNLLITLQLLF, ISGHFPVSNLYESLYFLAWGI, IIPSIAIPIELLTVAFACFVL, VMLSYAALIIGSLLSASVLFI, SILIGFVLLTLGLISGAVWAN, TWAFITWLFYAAYLHMRI, and LATSGFLVVIVCYLGVNFLGI.

Belongs to the CcmF/CycK/Ccl1/NrfE/CcsA family. May interact with ccs1.

The protein resides in the cellular thylakoid membrane. Required during biogenesis of c-type cytochromes (cytochrome c6 and cytochrome f) at the step of heme attachment. The chain is Cytochrome c biogenesis protein CcsA from Prochlorococcus marinus (strain MIT 9312).